We begin with the raw amino-acid sequence, 450 residues long: tRNA modification GTPase MnmE (450 aa).

Positions 23, 79, and 118 each coordinate (6S)-5-formyl-5,6,7,8-tetrahydrofolate. The region spanning 214–374 (GITLILVGKP…LKEHILNKVG (161 aa)) is the TrmE-type G domain. A K(+)-binding site is contributed by asparagine 224. Residues 224–229 (NAGKSS), 243–249 (TSIAGTT), and 268–271 (DTAG) each bind GTP. Serine 228 is a binding site for Mg(2+). K(+) is bound by residues threonine 243, isoleucine 245, and threonine 248. Threonine 249 provides a ligand contact to Mg(2+). Lysine 450 provides a ligand contact to (6S)-5-formyl-5,6,7,8-tetrahydrofolate.

This sequence belongs to the TRAFAC class TrmE-Era-EngA-EngB-Septin-like GTPase superfamily. TrmE GTPase family. Homodimer. Heterotetramer of two MnmE and two MnmG subunits. K(+) is required as a cofactor.

Its subcellular location is the cytoplasm. In terms of biological role, exhibits a very high intrinsic GTPase hydrolysis rate. Involved in the addition of a carboxymethylaminomethyl (cmnm) group at the wobble position (U34) of certain tRNAs, forming tRNA-cmnm(5)s(2)U34. This chain is tRNA modification GTPase MnmE, found in Francisella tularensis subsp. novicida (strain U112).